We begin with the raw amino-acid sequence, 121 residues long: Small ribosomal subunit protein uS13 (121 aa).

The disordered stretch occupies residues 94–121 (GLPVRGQNTKNNARTRKGKAVAIAGKKK). Basic residues predominate over residues 106 to 121 (ARTRKGKAVAIAGKKK).

This sequence belongs to the universal ribosomal protein uS13 family. In terms of assembly, part of the 30S ribosomal subunit. Forms a loose heterodimer with protein S19. Forms two bridges to the 50S subunit in the 70S ribosome.

Its function is as follows. Located at the top of the head of the 30S subunit, it contacts several helices of the 16S rRNA. In the 70S ribosome it contacts the 23S rRNA (bridge B1a) and protein L5 of the 50S subunit (bridge B1b), connecting the 2 subunits; these bridges are implicated in subunit movement. Contacts the tRNAs in the A and P-sites. The chain is Small ribosomal subunit protein uS13 from Streptococcus sanguinis (strain SK36).